The primary structure comprises 179 residues: FAD-dependent monooxygenase nscC (179 aa).

The first 21 residues, methionine 1–serine 21, serve as a signal peptide directing secretion. Glutamate 35 and alanine 46 together coordinate FAD. Asparagine 92 carries an N-linked (GlcNAc...) asparagine glycan. An FAD-binding site is contributed by arginine 119. Asparagine 170 carries N-linked (GlcNAc...) asparagine glycosylation.

It belongs to the paxM FAD-dependent monooxygenase family. The cofactor is FAD.

The protein operates within secondary metabolite biosynthesis. Functionally, FAD-dependent monooxygenase; part of the gene cluster that mediates the biosynthesis of neosartoricin B, a prenylated anthracenone that probably exhibits T-cell antiproliferative activity, suggestive of a physiological role as an immunosuppressive agent. The non-reducing polyketide synthase nscA probably synthesizes and cyclizes the decaketide backbone. The hydrolase nscB then mediates the product release through hydrolysis followed by spontaneous decarboxylation. The prenyltransferase nscD catalyzes the addition of the dimethylallyl group to the aromatic C5. The FAD-dependent monooxygenase nscC is then responsible for the stereospecific hydroxylation at C2. Neosartoricin B can be converted into two additional compounds neosartoricins C and D. Neosartoricin C is a spirocyclic compound that is cyclized through the attack of C3 hydroxyl on C14, followed by dehydration. On the other hand, neosartoricin D is a further cyclized compound in which attack of C2 on C14 in neosartoricin C results in the formation of the acetal-containing dioxabicyclo-octanone ring. Both of these compounds are novel and possibly represent related metabolites of the gene cluster. The sequence is that of FAD-dependent monooxygenase nscC from Trichophyton equinum (strain ATCC MYA-4606 / CBS 127.97) (Horse ringworm fungus).